The chain runs to 197 residues: Large ribosomal subunit protein uL22 (197 aa).

A disordered region spans residues 118 to 197; the sequence is ESRPAKDQRS…ETSAAKGGSD (80 aa). Low complexity predominate over residues 149–165; it reads APAKKAAAKAPAKKAPA. Basic residues predominate over residues 172–183; the sequence is TPAKKAPAKKAP. Low complexity predominate over residues 184–197; it reads AKASETSAAKGGSD.

Belongs to the universal ribosomal protein uL22 family. As to quaternary structure, part of the 50S ribosomal subunit.

Functionally, this protein binds specifically to 23S rRNA; its binding is stimulated by other ribosomal proteins, e.g. L4, L17, and L20. It is important during the early stages of 50S assembly. It makes multiple contacts with different domains of the 23S rRNA in the assembled 50S subunit and ribosome. In terms of biological role, the globular domain of the protein is located near the polypeptide exit tunnel on the outside of the subunit, while an extended beta-hairpin is found that lines the wall of the exit tunnel in the center of the 70S ribosome. This is Large ribosomal subunit protein uL22 from Mycobacterium bovis (strain ATCC BAA-935 / AF2122/97).